A 351-amino-acid polypeptide reads, in one-letter code: Anaerobic nitrite reductase Glb1-2 (351 aa).

2 Globin domains span residues 13–162 (DFTE…VEMK) and 184–333 (CFTE…AEMK). 12 residues coordinate heme b: S56, K70, H74, K104, T108, H109, S227, K241, H245, K275, T279, and H280. The tract at residues 331 to 351 (EMKKTDHDHQTNVEDKSKPSS) is disordered.

The protein belongs to the plant globin family. Monomer. Heme b is required as a cofactor. In terms of tissue distribution, predominantly expressed in nodules and roots, and, to a lesser extent, in leaves, at low levels in pods, but barely in stems, petioles, buds and flowers. As to expression, mainly expressed in nodules and roots at low levels, and barely in leaves. Expressed at very low levels in nodules, roots and pods.

It is found in the cytoplasm. Its subcellular location is the nucleus. It catalyses the reaction Fe(III)-heme b-[protein] + nitric oxide + H2O = Fe(II)-heme b-[protein] + nitrite + 2 H(+). Functionally, phytoglobin that regulates the fine tuning of nitric oxide (NO) concentration in the cytosol in response to sudden changes in O(2) availability, and performs both symbiotic and nonsymbiotic functions. Exhibits NO dioxygenase activity in the presence of O(2) but nitrite reductase (NiR) activity in the absence of O(2) (e.g. during flooding or in waterlogged soil). May not function as an oxygen storage or transport protein. Extremely reactive toward the physiological ligands O(2), nitric oxide (NO), and nitrite with a very high affinity for O(2) through an hexacoordinate heme iron because of a very low dissociation constant. In terms of biological role, very high affinity for O(2) through two hexacoordinate heme irons. Extremely reactive toward the physiological ligands O(2), nitric oxide (NO), and nitrite. Very high affinity for O(2) through a single hexacoordinate heme iron. Extremely reactive toward the physiological ligands O(2), nitric oxide (NO), and nitrite. The polypeptide is Anaerobic nitrite reductase Glb1-2 (Medicago truncatula (Barrel medic)).